We begin with the raw amino-acid sequence, 143 residues long: Large ribosomal subunit protein uL11 (143 aa).

This sequence belongs to the universal ribosomal protein uL11 family. As to quaternary structure, part of the ribosomal stalk of the 50S ribosomal subunit. Interacts with L10 and the large rRNA to form the base of the stalk. L10 forms an elongated spine to which L12 dimers bind in a sequential fashion forming a multimeric L10(L12)X complex. In terms of processing, one or more lysine residues are methylated.

Functionally, forms part of the ribosomal stalk which helps the ribosome interact with GTP-bound translation factors. This Caulobacter sp. (strain K31) protein is Large ribosomal subunit protein uL11.